The chain runs to 522 residues: Leucine-rich repeat transmembrane neuronal protein 1 (522 aa).

Positions 1–34 are cleaved as a signal peptide; the sequence is MDFLLLGLCLYWLLRRPSGVVLCLLGACFQMLPA. An LRRNT domain is found at 35 to 63; sequence APSGCPQLCRCEGRLLYCEALNLTEAPHN. The Extracellular portion of the chain corresponds to 35-427; it reads APSGCPQLCR…HAENAVQIHK (393 aa). Residues N56 and N63 are each glycosylated (N-linked (GlcNAc...) asparagine). LRR repeat units lie at residues 64–87, 89–111, 112–135, 137–159, 161–183, 184–207, 209–231, 233–255, 256–278, and 279–302; these read LSGLLGLSLRYNSLSELRAGQFTG, MQLTWLYLDHNHICSVQGDAFQK, LRRVKELTLSSNQITQLPNTTFRP, PNLRSVDLSYNKLQALAPDLFHG, RKLTTLHMRANAIQFVPVRIFQD, CRSLKFLDIGYNQLKSLARNSFAG, FKLTELHLEHNDLVKVNFAHFPR, ISLHSLCLRRNKVAIVVSSLDWV, WNLEKMDLSGNEIEYMEPHVFET, and VPHLQSLQLDSNRLTYIEPRILNS. Residue N130 is glycosylated (N-linked (GlcNAc...) asparagine). Residues 314 to 365 form the LRRCT domain; the sequence is NLWDCGRNVCALASWLNNFQGRYDGNLQCASPEYAQGEDVLDAVYAFHLCED. N-linked (GlcNAc...) asparagine glycosylation occurs at N380. The tract at residues 382–401 is disordered; the sequence is SDLGPPASSATTLADGGEGQ. Residues 428 to 448 traverse the membrane as a helical segment; sequence VVTGTMALIFSFLIVVLVLYV. Residues 449-522 lie on the Cytoplasmic side of the membrane; it reads SWKCFPASLR…HQQPARECEV (74 aa).

This sequence belongs to the LRRTM family. Predominantly expressed in forebrain regions including thalamus and cerebral cortex.

The protein localises to the cell membrane. It localises to the postsynaptic cell membrane. Its function is as follows. Exhibits strong synaptogenic activity, restricted to excitatory presynaptic differentiation, acting at both pre- and postsynaptic level. This chain is Leucine-rich repeat transmembrane neuronal protein 1 (LRRTM1), found in Homo sapiens (Human).